The following is a 276-amino-acid chain: Insulin-like growth factor-binding protein 2-A (276 aa).

The N-terminal stretch at 1-22 (MLSYVSCGLLLALVTFHGTARS) is a signal peptide. Residues 24-105 (MVFRCPSCTA…VQGLGRCGRK (82 aa)) enclose the IGFBP N-terminal domain. Intrachain disulfides connect C28–C55, C31–C57, C39–C58, C46–C61, C69–C82, C76–C102, C180–C214, C225–C236, and C238–C259. In terms of domain architecture, Thyroglobulin type-1 spans 177-259 (QSQCQQELDQ…SPLIRGDPNC (83 aa)). Positions 254–256 (RGD) match the Cell attachment site motif.

As to quaternary structure, interacts equally well with igf1 and igf2. In terms of tissue distribution, in embryos at 24 hpf, initially expressed in the lens and cranial region, and at 48 and 72 hpf in the brain boundary vasculature. Expression in these regions persists throughout the hatching period and by 96 hpf expression is most abundant in the liver. In both male and female adults, highest expression is in the liver with modest expression in the brain. In male but not females adults, expressed at a low level in muscle and gonad. Also expressed in the adult intestine.

Its subcellular location is the secreted. In terms of biological role, IGF-binding proteins prolong the half-life of the IGFs and have been shown to either inhibit or stimulate the growth promoting effects of the IGFs on cell culture. They alter the interaction of IGFs with their cell surface receptors. The sequence is that of Insulin-like growth factor-binding protein 2-A (igfbp2a) from Danio rerio (Zebrafish).